Consider the following 327-residue polypeptide: MALLNVDKLSVHFGDESAPFRAVDRISYSVKQGEVVGIVGESGSGKSVSSLAIMGLIDYPGRVMAEKLEFNGQDLQRISEKERRNLVGAEVAMIFQDPMTSLNPCYTVGFQIMEAIKVHQGGNKSTRRQRAIDLLNQVGIPDPASRLDVYPHQLSGGMSQRVMIAMAIACRPKLLIADEPTTALDVTIQAQIIELLLELQQKENMALVLITHDLALVAEAAHKIIVMYAGQVVETGDAHAIFHAPRHPYTQALLRALPEFAQDKERLASLPGVVPGKYDRPNGCLLNPRCPYATDRCRAEEPALNMLADGRQSKCHYPLDDAGRPTL.

Positions 4 to 254 constitute an ABC transporter domain; sequence LNVDKLSVHF…PRHPYTQALL (251 aa). 40–47 lines the ATP pocket; the sequence is GESGSGKS.

Belongs to the ABC transporter superfamily. The complex is composed of two ATP-binding proteins (DppD and DppF), two transmembrane proteins (DppB and DppC) and a solute-binding protein (DppA). MppA can replace DppA as binding protein for heme and ALA transport.

It is found in the cell inner membrane. It catalyses the reaction a dipeptide(out) + ATP + H2O = a dipeptide(in) + ADP + phosphate + H(+). Its function is as follows. Part of the ABC transporter DppABCDF involved in dipeptide transport. Responsible for energy coupling to the transport system. When a foreign outer membrane heme receptor is expressed in E.coli, DppABCDF can also transport heme and its precursor, 5-aminolevulinic acid (ALA), from the periplasm into the cytoplasm. The sequence is that of Dipeptide transport ATP-binding protein DppD (dppD) from Escherichia coli (strain K12).